The sequence spans 165 residues: Peptide methionine sulfoxide reductase MsrA (165 aa).

Residue Cys-11 is part of the active site.

The protein belongs to the MsrA Met sulfoxide reductase family.

It catalyses the reaction L-methionyl-[protein] + [thioredoxin]-disulfide + H2O = L-methionyl-(S)-S-oxide-[protein] + [thioredoxin]-dithiol. The catalysed reaction is [thioredoxin]-disulfide + L-methionine + H2O = L-methionine (S)-S-oxide + [thioredoxin]-dithiol. Has an important function as a repair enzyme for proteins that have been inactivated by oxidation. Catalyzes the reversible oxidation-reduction of methionine sulfoxide in proteins to methionine. The protein is Peptide methionine sulfoxide reductase MsrA of Ureaplasma urealyticum serovar 10 (strain ATCC 33699 / Western).